The following is a 178-amino-acid chain: Large ribosomal subunit protein uL6 (178 aa).

This sequence belongs to the universal ribosomal protein uL6 family. Part of the 50S ribosomal subunit.

This protein binds to the 23S rRNA, and is important in its secondary structure. It is located near the subunit interface in the base of the L7/L12 stalk, and near the tRNA binding site of the peptidyltransferase center. In Buchnera aphidicola subsp. Acyrthosiphon pisum (strain APS) (Acyrthosiphon pisum symbiotic bacterium), this protein is Large ribosomal subunit protein uL6.